The following is a 209-amino-acid chain: Uracil phosphoribosyltransferase (209 aa).

Residues arginine 79, arginine 104, and aspartate 131–serine 139 contribute to the 5-phospho-alpha-D-ribose 1-diphosphate site. Uracil is bound by residues isoleucine 194 and glycine 199 to alanine 201. Aspartate 200 contacts 5-phospho-alpha-D-ribose 1-diphosphate.

Belongs to the UPRTase family. It depends on Mg(2+) as a cofactor.

It carries out the reaction UMP + diphosphate = 5-phospho-alpha-D-ribose 1-diphosphate + uracil. Its pathway is pyrimidine metabolism; UMP biosynthesis via salvage pathway; UMP from uracil: step 1/1. Its activity is regulated as follows. Allosterically activated by GTP. Functionally, catalyzes the conversion of uracil and 5-phospho-alpha-D-ribose 1-diphosphate (PRPP) to UMP and diphosphate. This is Uracil phosphoribosyltransferase from Sinorhizobium medicae (strain WSM419) (Ensifer medicae).